We begin with the raw amino-acid sequence, 142 residues long: MAP3K7 C-terminal-like protein (142 aa).

In terms of tissue distribution, detected in lung and peripheral blood leukocytes. Expressed predominantly in peripheral blood leukocytes and ubiquitously in adult and fetal tissues. Also expressed strongly in breast carcinoma GI-101, colon adenocarcinoma GI-112, and prostatic adenocarcinoma PC3.

This is MAP3K7 C-terminal-like protein (MAP3K7CL) from Homo sapiens (Human).